The following is a 441-amino-acid chain: Platelet-activating factor acetylhydrolase (441 aa).

Residues 1-21 (MVPPKLHVLFCLCGCLAVVYP) form the signal peptide. Residue serine 273 is the Nucleophile of the active site. Catalysis depends on charge relay system residues aspartate 296 and histidine 351. Asparagine 423 and asparagine 433 each carry an N-linked (GlcNAc...) asparagine glycan.

The protein belongs to the AB hydrolase superfamily. Lipase family. N-glycosylated. Macrophage-derived PLA2G7 carries sialylated complex-type N-glycans that hinder its binding to HDL particles. Plasma. Secreted by macrophages (at protein level).

It is found in the secreted. The protein resides in the extracellular space. It catalyses the reaction a 1-O-alkyl-2-acetyl-sn-glycero-3-phosphocholine + H2O = a 1-O-alkyl-sn-glycero-3-phosphocholine + acetate + H(+). The enzyme catalyses 1-O-decyl-2-acetyl-sn-glycero-3-phosphocholine + H2O = 1-O-decyl-sn-glycero-3-phosphocholine + acetate + H(+). It carries out the reaction 1-O-dodecyl-2-acetyl-sn-glycero-3-phosphocholine + H2O = 1-O-dodecyl-sn-glycero-3-phosphocholine + acetate + H(+). The catalysed reaction is 1-O-tetradecyl-2-acetyl-sn-glycero-3-phosphocholine + H2O = 1-O-tetradecyl-sn-glycero-3-phosphocholine + acetate + H(+). It catalyses the reaction 1-O-hexadecyl-2-acetyl-sn-glycero-3-phosphocholine + H2O = 1-O-hexadecyl-sn-glycero-3-phosphocholine + acetate + H(+). The enzyme catalyses 1-O-octadecyl-2-acetyl-sn-glycero-3-phosphocholine + H2O = 1-O-octadecyl-sn-glycero-3-phosphocholine + acetate + H(+). It carries out the reaction 1-hexadecanoyl-2-acetyl-sn-glycero-3-phosphocholine + H2O = 1-hexadecanoyl-sn-glycero-3-phosphocholine + acetate + H(+). The catalysed reaction is 1-hexadecanoyl-2-propionyl-sn-glycero-3-phosphocholine + H2O = propanoate + 1-hexadecanoyl-sn-glycero-3-phosphocholine + H(+). It catalyses the reaction 1-hexadecanoyl-2-butanoyl-sn-glycero-3-phosphocholine + H2O = butanoate + 1-hexadecanoyl-sn-glycero-3-phosphocholine + H(+). The enzyme catalyses 1-hexadecanoyl-2-pentanoyl-sn-glycero-3-phosphocholine + H2O = pentanoate + 1-hexadecanoyl-sn-glycero-3-phosphocholine + H(+). It carries out the reaction 1-hexadecanoyl-2-glutaroyl-sn-glycero-3-phosphocholine + H2O = glutarate + 1-hexadecanoyl-sn-glycero-3-phosphocholine + H(+). The catalysed reaction is 1-hexadecanoyl-2-(5-oxopentanoyl)-sn-glycero-3-phosphocholine + H2O = 5-oxopentanoate + 1-hexadecanoyl-sn-glycero-3-phosphocholine + H(+). It catalyses the reaction 1-hexadecanoyl-2-(9-oxononanoyl)-sn-glycero-3-phosphocholine + H2O = 9-oxononanoate + 1-hexadecanoyl-sn-glycero-3-phosphocholine + H(+). The enzyme catalyses 1-hexadecanoyl-2-[9-hydroperoxy-(10E-octadecenoyl)]-sn-glycero-3-phosphocholine + H2O = 9-hydroperoxy-10E-octadecenoate + 1-hexadecanoyl-sn-glycero-3-phosphocholine + H(+). It carries out the reaction 1-hexadecanoyl-2-(10-hydroperoxy-8E-octadecenoyl)-sn-glycero-3-phosphocholine + H2O = 10-hydroperoxy-(8E)-octadecenoate + 1-hexadecanoyl-sn-glycero-3-phosphocholine + H(+). Its function is as follows. Lipoprotein-associated calcium-independent phospholipase A2 involved in phospholipid catabolism during inflammatory and oxidative stress response. At the lipid-aqueous interface, hydrolyzes the ester bond of fatty acyl group attached at sn-2 position of phospholipids (phospholipase A2 activity). Specifically targets phospholipids with a short-chain fatty acyl group at sn-2 position. Can hydrolyze phospholipids with long fatty acyl chains, only if they carry oxidized functional groups. Hydrolyzes and inactivates platelet-activating factor (PAF, 1-O-alkyl-2-acetyl-sn-glycero-3-phosphocholine), a potent pro-inflammatory signaling lipid that acts through PTAFR on various innate immune cells. Hydrolyzes oxidatively truncated phospholipids carrying an aldehyde group at omega position, preventing their accumulation in low-density lipoprotein (LDL) particles and uncontrolled pro-inflammatory effects. As part of high-density lipoprotein (HDL) particles, can hydrolyze phospholipids having long-chain fatty acyl hydroperoxides at sn-2 position and protect against potential accumulation of these oxylipins in the vascular wall. Catalyzes the release from membrane phospholipids of F2-isoprostanes, lipid biomarkers of cellular oxidative damage. This is Platelet-activating factor acetylhydrolase (PLA2G7) from Homo sapiens (Human).